The primary structure comprises 920 residues: Anoctamin-4 (920 aa).

Residues 1–323 (METSSSGITN…LYFAWLGWYT (323 aa)) are Cytoplasmic-facing. Positions 38–64 (KDDDSLLHPGNLTSTSDDASRLEAGGE) are disordered. A helical membrane pass occupies residues 324-344 (GMLFPAAFIGLFVFLYGVITL). The Extracellular portion of the chain corresponds to 345-389 (DHCQVSKEVCQATDIIMCPVCDKYCPFMRLSDSCVYAKVTHLFDN). Residues 390 to 410 (GATVFFAVFMAVWATVFLEFW) form a helical membrane-spanning segment. Residues 411-470 (KRRRAVIAYDWDLIDWEEEEEEIRPQFEAKYSKKERMNPISGKPEPYQAFADKCSRLIVS) lie on the Cytoplasmic side of the membrane. The chain crosses the membrane as a helical span at residues 471 to 491 (ASGIFFMICVVIAAVFGIVIY). Residues 492–512 (RVVTVSTFAAFKWALIRNNSQ) are Extracellular-facing. N509 carries N-linked (GlcNAc...) asparagine glycosylation. Residues 513-533 (VATTGTAVCINFCIIMLLNVL) traverse the membrane as a helical segment. The Cytoplasmic portion of the chain corresponds to 534–560 (YEKVALLLTNLEQPRTESEWENSFTLK). A helical transmembrane segment spans residues 561–581 (MFLFQFVNLNSSTFYIAFFLG). At 582–680 (RFTGHPGAYL…AYGLFDEYLE (99 aa)) the chain is on the extracellular side. A helical transmembrane segment spans residues 681 to 701 (MILQFGFTTIFVAAFPLAPLL). Residues 702–733 (ALLNNIIEIRLDAYKFVTQWRRPLASRAKDIG) lie on the Cytoplasmic side of the membrane. The chain crosses the membrane as a helical span at residues 734 to 754 (IWYGILEGIGILSVITNAFVI). Residues 755 to 850 (AITSDFIPRL…QFWHVLAARL (96 aa)) lie on the Extracellular side of the membrane. 2 N-linked (GlcNAc...) asparagine glycosylation sites follow: N789 and N802. The helical transmembrane segment at 851–871 (AFIIVFEHLVFCIKHLISYLI) threads the bilayer. Topologically, residues 872–920 (PDLPKDLRDRMRREKYLIQEMMYEAELERLQKERKERKKNGKAHHNEWP) are cytoplasmic.

This sequence belongs to the anoctamin family.

The protein resides in the cell membrane. It carries out the reaction a 1,2-diacyl-sn-glycero-3-phospho-L-serine(in) = a 1,2-diacyl-sn-glycero-3-phospho-L-serine(out). The enzyme catalyses a beta-D-galactosyl-(1&lt;-&gt;1')-N-acylsphing-4-enine(out) = a beta-D-galactosyl-(1&lt;-&gt;1')-N-acylsphing-4-enine(in). It catalyses the reaction a 1,2-diacyl-sn-glycero-3-phosphocholine(in) = a 1,2-diacyl-sn-glycero-3-phosphocholine(out). Its function is as follows. Has calcium-dependent phospholipid scramblase activity; scrambles phosphatidylserine, phosphatidylcholine and galactosylceramide. Does not exhibit calcium-activated chloride channel (CaCC) activity. This is Anoctamin-4 from Bos taurus (Bovine).